The chain runs to 166 residues: Spiderine-1b (166 aa).

The first 18 residues, 1 to 18, serve as a signal peptide directing secretion; it reads MKFALVLLGICAFYLVNA. A propeptide spans 19–58 (removed in mature form); the sequence is TGDLETELEASELQELQEALDLIGETSLESLEAEELEEAR. The linear cationic cytotoxin domain stretch occupies residues 59–99; sequence KFKWGKLFSAAKKLYKKGKKLSKNKNFKKALKFGKQLAKNL. One can recognise an Oxytoxin-type inhibitor cystine knot (ICK) domain in the interval 113–166; the sequence is NNKCWAIGTTCSDDCDCCPEHHCHCPAGKWLPGLFRCTCQVTESDKVNKCPPAE. 5 cysteine pairs are disulfide-bonded: C116–C130, C123–C135, C127–C162, C129–C151, and C137–C149.

Belongs to the spiderine family. Cationic/spiderine subfamily. As to expression, expressed by the venom gland.

The protein localises to the secreted. Has antimicrobial, insecticidal, cytolytic and cytotoxic activity. This Oxyopes takobius (Lynx spider) protein is Spiderine-1b.